Consider the following 194-residue polypeptide: uncharacterized protein (194 aa).

One can recognise an Exonuclease domain in the interval 20 to 185; that stretch reads RIFIDTETTG…ADCRMTLGII (166 aa).

This is an uncharacterized protein from Escherichia coli (Bacteriophage 186).